Consider the following 1060-residue polypeptide: FACT complex subunit SPT16 (1060 aa).

The interval 458 to 490 (FNDDNETQKENNNNNNKRPGLSQTSNTTALKLE) is disordered. Residues 478–490 (LSQTSNTTALKLE) show a composition bias toward polar residues. Residues 508 to 532 (NADDANSEKLRQEIQIKLHEKRLQE) adopt a coiled-coil conformation. The tract at residues 977-1060 (QGESDEEEES…AKADRNSGFD (84 aa)) is disordered. Acidic residues-rich tracts occupy residues 979–990 (ESDEEEESDEES) and 997–1044 (EDPQ…EDWD). Residues 1045–1060 (ALERKAAKADRNSGFD) show a composition bias toward basic and acidic residues.

This sequence belongs to the peptidase M24 family. SPT16 subfamily. As to quaternary structure, forms a stable heterodimer with POB3. The SPT16-POB3 dimer weakly associates with multiple molecules of NHP6 to form the FACT complex.

It is found in the nucleus. It localises to the chromosome. Component of the FACT complex, a general chromatin factor that acts to reorganize nucleosomes. The FACT complex is involved in multiple processes that require DNA as a template such as mRNA elongation, DNA replication and DNA repair. During transcription elongation the FACT complex acts as a histone chaperone that both destabilizes and restores nucleosomal structure. It facilitates the passage of RNA polymerase II and transcription by promoting the dissociation of one histone H2A-H2B dimer from the nucleosome, then subsequently promotes the reestablishment of the nucleosome following the passage of RNA polymerase II. The sequence is that of FACT complex subunit SPT16 (CDC68) from Candida albicans (strain SC5314 / ATCC MYA-2876) (Yeast).